The sequence spans 428 residues: Glutamyl-tRNA reductase (428 aa).

Residues 55-58 (TCNR), Ser114, 119-121 (ETQ), and Gln125 contribute to the substrate site. The active-site Nucleophile is the Cys56. 194-199 (GAGEMI) serves as a coordination point for NADP(+).

It belongs to the glutamyl-tRNA reductase family. As to quaternary structure, homodimer.

It carries out the reaction (S)-4-amino-5-oxopentanoate + tRNA(Glu) + NADP(+) = L-glutamyl-tRNA(Glu) + NADPH + H(+). It participates in porphyrin-containing compound metabolism; protoporphyrin-IX biosynthesis; 5-aminolevulinate from L-glutamyl-tRNA(Glu): step 1/2. Functionally, catalyzes the NADPH-dependent reduction of glutamyl-tRNA(Glu) to glutamate 1-semialdehyde (GSA). In Paraburkholderia xenovorans (strain LB400), this protein is Glutamyl-tRNA reductase.